The following is a 1052-amino-acid chain: Ubiquitin-like modifier-activating enzyme 6 (1052 aa).

At M1 the chain carries N-acetylmethionine. The tract at residues 1–21 is disordered; that stretch reads MEGSEPVAAHQGEEASCSSWG. Residue R46 coordinates ATP. Residue T54 is modified to Phosphothreonine. Position 301 is a phosphoserine (S301). A470 and D497 together coordinate ATP. Positions 499 and 502 each coordinate Mg(2+). 4 residues coordinate ATP: N505, R508, Q509, and K521. At K544 the chain carries N6-acetyllysine. V545 is an ATP binding site. D569 serves as a coordination point for Mg(2+). N570 is an ATP binding site. C625 serves as the catalytic Glycyl thioester intermediate. K729 is modified (N6-acetyllysine). Phosphoserine is present on S737.

The protein belongs to the ubiquitin-activating E1 family. Forms a thioester with UBD in cells stimulated with tumor necrosis factor-alpha (TNFa) and interferon-gamma (IFNg). As to expression, widely expressed. Isoform 2 is predominantly expressed in testis with higher expression in adult testis than in fetal testis.

The catalysed reaction is ATP + ubiquitin + [E1 ubiquitin-activating enzyme]-L-cysteine = AMP + diphosphate + S-ubiquitinyl-[E1 ubiquitin-activating enzyme]-L-cysteine.. The protein operates within protein modification; protein ubiquitination. Functionally, activates ubiquitin by first adenylating its C-terminal glycine residue with ATP, and thereafter linking this residue to the side chain of a cysteine residue in E1, yielding a ubiquitin-E1 thioester and free AMP. Specific for ubiquitin, does not activate ubiquitin-like peptides. Also activates UBD/FAT10 conjugation via adenylation of its C-terminal glycine. Differs from UBE1 in its specificity for substrate E2 charging. Does not charge cell cycle E2s, such as CDC34. Essential for embryonic development. Isoform 2 may play a key role in ubiquitin system and may influence spermatogenesis and male fertility. In Homo sapiens (Human), this protein is Ubiquitin-like modifier-activating enzyme 6 (UBA6).